Reading from the N-terminus, the 379-residue chain is UDP-N-acetylglucosamine--N-acetylmuramyl-(pentapeptide) pyrophosphoryl-undecaprenol N-acetylglucosamine transferase (379 aa).

Residues 17–19, Asn128, Arg169, Ser197, and Gln298 contribute to the UDP-N-acetyl-alpha-D-glucosamine site; that span reads TGG.

It belongs to the glycosyltransferase 28 family. MurG subfamily.

Its subcellular location is the cell inner membrane. The catalysed reaction is di-trans,octa-cis-undecaprenyl diphospho-N-acetyl-alpha-D-muramoyl-L-alanyl-D-glutamyl-meso-2,6-diaminopimeloyl-D-alanyl-D-alanine + UDP-N-acetyl-alpha-D-glucosamine = di-trans,octa-cis-undecaprenyl diphospho-[N-acetyl-alpha-D-glucosaminyl-(1-&gt;4)]-N-acetyl-alpha-D-muramoyl-L-alanyl-D-glutamyl-meso-2,6-diaminopimeloyl-D-alanyl-D-alanine + UDP + H(+). It functions in the pathway cell wall biogenesis; peptidoglycan biosynthesis. Functionally, cell wall formation. Catalyzes the transfer of a GlcNAc subunit on undecaprenyl-pyrophosphoryl-MurNAc-pentapeptide (lipid intermediate I) to form undecaprenyl-pyrophosphoryl-MurNAc-(pentapeptide)GlcNAc (lipid intermediate II). This chain is UDP-N-acetylglucosamine--N-acetylmuramyl-(pentapeptide) pyrophosphoryl-undecaprenol N-acetylglucosamine transferase, found in Brucella suis (strain ATCC 23445 / NCTC 10510).